The primary structure comprises 44 residues: Mu-conotoxin-like Cal 12.1.1e (44 aa).

4 disulfides stabilise this stretch: C3–C16, C11–C28, C18–C33, and C27–C38. W17 carries the post-translational modification 6'-bromotryptophan. Residue P23 is modified to 4-hydroxyproline. 6'-bromotryptophan occurs at positions 36 and 37. 4-hydroxyproline is present on P39. Position 43 is a 6'-bromotryptophan (W43).

Expressed by the venom duct.

The protein localises to the secreted. Mu-conotoxins block voltage-gated sodium channels. This toxin reversibly blocks voltage-gated sodium channel in cephalopods, with no alteration in the voltage dependence of sodium conductance or on the kinetics of inactivation. This Californiconus californicus (California cone) protein is Mu-conotoxin-like Cal 12.1.1e.